We begin with the raw amino-acid sequence, 738 residues long: Zinc finger protein 235 (738 aa).

Residues 8–79 form the KRAB domain; the sequence is VTFKDVAVAF…ELQTQRGKHS (72 aa). The C2H2-type 1; degenerate zinc finger occupies 263–285; that stretch reads YQGNECEEAFNDSSSLELHKQVH. 15 C2H2-type zinc fingers span residues 319–341, 347–369, 375–397, 403–425, 431–453, 459–481, 487–509, 515–537, 543–565, 571–593, 599–621, 627–649, 655–677, 683–705, and 711–733; these read YWCHECGKGFSQSSNLQTHQRVH, YTCHECGKSFNQSSHLYAHLPIH, YRCDSCGKGFSRSTDLNIHCRVH, YKCEVCGKGFTQRSHLQAHERIH, YKCGDCGKRFSCSSNLHTHQRVH, YKCDECGKCFSLSFNLHSHQRVH, YKCEECGKGFSSASSFQSHQRVH, FRCNVCGKGFSQSSYFQAHQRVH, YKCEVCGKRFNWSLNLHNHQRVH, YKCEECGKGFSQASNLQAHQSVH, FKCDACQKRFSQASHLQAHQRVH, YKCDTCGKAFSQRSNLQVHQIIH, FKCEECGKEFSWSAGLSAHQRVH, YTCQQCGKGFSQASHFHTHQRVH, and YICDVCCKGFSQRSHLIYHQRVH.

Belongs to the krueppel C2H2-type zinc-finger protein family.

Its subcellular location is the nucleus. Functionally, may be involved in transcriptional regulation. The protein is Zinc finger protein 235 (ZNF235) of Homo sapiens (Human).